Reading from the N-terminus, the 415-residue chain is Serine hydroxymethyltransferase (415 aa).

(6S)-5,6,7,8-tetrahydrofolate-binding positions include leucine 121 and 125-127; that span reads GHL. Lysine 230 carries the post-translational modification N6-(pyridoxal phosphate)lysine. Position 355 to 357 (355 to 357) interacts with (6S)-5,6,7,8-tetrahydrofolate; the sequence is SPF.

It belongs to the SHMT family. Homodimer. Pyridoxal 5'-phosphate is required as a cofactor.

The protein resides in the cytoplasm. It catalyses the reaction (6R)-5,10-methylene-5,6,7,8-tetrahydrofolate + glycine + H2O = (6S)-5,6,7,8-tetrahydrofolate + L-serine. The protein operates within one-carbon metabolism; tetrahydrofolate interconversion. It participates in amino-acid biosynthesis; glycine biosynthesis; glycine from L-serine: step 1/1. Its function is as follows. Catalyzes the reversible interconversion of serine and glycine with tetrahydrofolate (THF) serving as the one-carbon carrier. This reaction serves as the major source of one-carbon groups required for the biosynthesis of purines, thymidylate, methionine, and other important biomolecules. Also exhibits THF-independent aldolase activity toward beta-hydroxyamino acids, producing glycine and aldehydes, via a retro-aldol mechanism. This chain is Serine hydroxymethyltransferase, found in Lactococcus lactis subsp. cremoris (strain SK11).